A 500-amino-acid polypeptide reads, in one-letter code: MHLSSSLLFTSALLAGGINASPATNAYRRQGADMRTIIGDTTPVLSNTTAVHFPGSGDFFSVTERWDVYRPPSYQAAITPTTEADIVSLVKMAKQHNIPFLATGGRHGYGTSLGKCQEGLAIDLSHFKDVKIDKQRETVTIGPGVVFADVFPVVSDAGYQVQTGTCSCVGMIGATIGAGIGRLDGVHGLVIDALESVRMITANGDIVEASKTKNPELFWGIRGAGANFGIITQATYKMHKSMGDIISFDLIYEPEQNVTLFNTVANMYLPPGLTVETIMSYNQTTEKPTIIVSSTYAGGSEAEARRWMQPLLRLNPWYKDIKAIPWKRMSKETALGLDKEVCANSQVFDIYGVNLRRHDANTWVKTFNKLAKFWNEQPAAQSSSVVLETWPNQAVVAVPDSETAYPWRDATTYVMIQMRWDAPGNPVETVADAMGRELRNDFAKTSGYNGLTVYVNYAHGDETPEQMYGRNKLHRLAKLKKQYDPSSVFGFHNPLPTSYP.

The signal sequence occupies residues 1 to 20 (MHLSSSLLFTSALLAGGINA). Asparagine 47 carries N-linked (GlcNAc...) asparagine glycosylation. In terms of domain architecture, FAD-binding PCMH-type spans 69-241 (YRPPSYQAAI…TQATYKMHKS (173 aa)). Asparagine 257 and asparagine 282 each carry an N-linked (GlcNAc...) asparagine glycan.

It belongs to the oxygen-dependent FAD-linked oxidoreductase family. The cofactor is FAD.

Functionally, FAD-linked oxidoreductase; part of the gene cluster that mediates the biosynthesis of sordarial, a salicylic aldehyde structurally related to the phytotoxin pyriculol. The most interesting aspect of this pathway is formation of an aromatic product from the highly reducing polyketide synthase srdA. SrdA synthesizes a reduced polyketide chain from one molecule of acetyl-CoA and five molecules of malonyl-CoA. The polyketide chain is then reductively released as an aldehyde. The oxidoreductases srdC, srdD and srdE then oxidize one of the hydroxy groups to facilitate the intramolecular aldol condensation, followed by dehydration to yield a salicylic aldehyde. This aldehyde can undergo facile reduction by endogenous reductases to yield the alcohol 1-hydroxy-2-hydroxymethyl-3-pent-1,3-dienylbenzene. The flavin-dependent srdI counteract against the propensity of the aldehydes to be reduced under physiological conditions and is responsible for reoxidizing 1-hydroxy-2-hydroxymethyl-3-pent-1,3-dienylbenzene back to the salicylic aldehyde. This salicylic aldehyde is then selectively epoxidized by the cupin-domain-containing oxidoreductase srdB to yield the epoxide, which can be hydrolyzed stereoselectively by the hydrolase srdG to give the final product sordarial. The protein is FAD-linked oxidoreductase srdI of Neurospora crassa (strain ATCC 24698 / 74-OR23-1A / CBS 708.71 / DSM 1257 / FGSC 987).